The chain runs to 238 residues: 3,4-dihydroxy-2-butanone 4-phosphate synthase (238 aa).

D-ribulose 5-phosphate-binding positions include 26–27, aspartate 31, 166–170, and glutamate 190; these read RE and RVGQT. Glutamate 27 lines the Mg(2+) pocket.

Belongs to the DHBP synthase family. In terms of assembly, homodimer. Mg(2+) serves as cofactor. Requires Mn(2+) as cofactor.

The enzyme catalyses D-ribulose 5-phosphate = (2S)-2-hydroxy-3-oxobutyl phosphate + formate + H(+). It functions in the pathway cofactor biosynthesis; riboflavin biosynthesis; 2-hydroxy-3-oxobutyl phosphate from D-ribulose 5-phosphate: step 1/1. Its function is as follows. Catalyzes the conversion of D-ribulose 5-phosphate to formate and 3,4-dihydroxy-2-butanone 4-phosphate. This Archaeoglobus fulgidus (strain ATCC 49558 / DSM 4304 / JCM 9628 / NBRC 100126 / VC-16) protein is 3,4-dihydroxy-2-butanone 4-phosphate synthase.